A 417-amino-acid polypeptide reads, in one-letter code: UDP-N-acetylmuramoylalanine--D-glutamate ligase (417 aa).

Position 104–110 (104–110 (GSNGKST)) interacts with ATP.

It belongs to the MurCDEF family.

It localises to the cytoplasm. The catalysed reaction is UDP-N-acetyl-alpha-D-muramoyl-L-alanine + D-glutamate + ATP = UDP-N-acetyl-alpha-D-muramoyl-L-alanyl-D-glutamate + ADP + phosphate + H(+). It participates in cell wall biogenesis; peptidoglycan biosynthesis. Its function is as follows. Cell wall formation. Catalyzes the addition of glutamate to the nucleotide precursor UDP-N-acetylmuramoyl-L-alanine (UMA). The polypeptide is UDP-N-acetylmuramoylalanine--D-glutamate ligase (Francisella tularensis subsp. novicida (strain U112)).